We begin with the raw amino-acid sequence, 502 residues long: Lysine--tRNA ligase (502 aa).

Mg(2+) contacts are provided by Glu413 and Glu420.

This sequence belongs to the class-II aminoacyl-tRNA synthetase family. Homodimer. It depends on Mg(2+) as a cofactor.

It localises to the cytoplasm. The enzyme catalyses tRNA(Lys) + L-lysine + ATP = L-lysyl-tRNA(Lys) + AMP + diphosphate. The protein is Lysine--tRNA ligase of Aromatoleum aromaticum (strain DSM 19018 / LMG 30748 / EbN1) (Azoarcus sp. (strain EbN1)).